The primary structure comprises 350 residues: tRNA uridine(34) hydroxylase (350 aa).

Positions 146–240 (DDPDAVFIDM…YARRAREQGL (95 aa)) constitute a Rhodanese domain. The active-site Cysteine persulfide intermediate is the C200. Residues 319–328 (RRRRAGRENG) show a composition bias toward basic and acidic residues. Residues 319–350 (RRRRAGRENGNKIFNKSRGRLNSKLSIPDPAE) form a disordered region.

Belongs to the TrhO family.

It catalyses the reaction uridine(34) in tRNA + AH2 + O2 = 5-hydroxyuridine(34) in tRNA + A + H2O. Its function is as follows. Catalyzes oxygen-dependent 5-hydroxyuridine (ho5U) modification at position 34 in tRNAs. This Salmonella gallinarum (strain 287/91 / NCTC 13346) protein is tRNA uridine(34) hydroxylase.